Here is a 146-residue protein sequence, read N- to C-terminus: ATP synthase epsilon chain 2 (146 aa).

This sequence belongs to the ATPase epsilon chain family. F-type ATPases have 2 components, CF(1) - the catalytic core - and CF(0) - the membrane proton channel. CF(1) has five subunits: alpha(3), beta(3), gamma(1), delta(1), epsilon(1). CF(0) has three main subunits: a, b and c.

The protein localises to the cell inner membrane. Produces ATP from ADP in the presence of a proton gradient across the membrane. This Cereibacter sphaeroides (strain ATCC 17023 / DSM 158 / JCM 6121 / CCUG 31486 / LMG 2827 / NBRC 12203 / NCIMB 8253 / ATH 2.4.1.) (Rhodobacter sphaeroides) protein is ATP synthase epsilon chain 2.